Reading from the N-terminus, the 349-residue chain is 26S proteasome non-ATPase regulatory subunit 4 (349 aa).

The VWFA domain maps to 5–188 (ATIVCLDNSE…LSDIILQSPI (184 aa)). One can recognise a UIM 1 domain in the interval 204–223 (DTDPDLAMALKLSLEEEKQR). Over residues 219–234 (EEKQRQERERKAREEA) the composition is skewed to basic and acidic residues. 2 disordered regions span residues 219–257 (EEKQ…MDVN) and 274–349 (TDKM…NEKK). Positions 235-253 (NGGSTNSGTTTTTAPTESN) are enriched in low complexity. Residues 259-278 (EDDPELAEALALSMATDKME) enclose the UIM 2 domain. Positions 280-301 (QSSTTNTDSQPPQQQQQPPTDD) are enriched in low complexity. A compositionally biased stretch (basic and acidic residues) spans 335-349 (LSKKDEDKDKDNEKK).

Belongs to the proteasome subunit S5A family. As to quaternary structure, the 26S proteasome is composed of a core protease, known as the 20S proteasome, capped at one or both ends by the 19S regulatory complex (RC). The RC is composed of at least 18 different subunits in two subcomplexes, the base and the lid, which form the portions proximal and distal to the 20S proteolytic core, respectively.

Binds and presumably selects ubiquitin-conjugates for destruction. In Dictyostelium discoideum (Social amoeba), this protein is 26S proteasome non-ATPase regulatory subunit 4 (psmD4).